A 232-amino-acid chain; its full sequence is Large ribosomal subunit protein uL1 (232 aa).

This sequence belongs to the universal ribosomal protein uL1 family. As to quaternary structure, part of the 50S ribosomal subunit.

Binds directly to 23S rRNA. The L1 stalk is quite mobile in the ribosome, and is involved in E site tRNA release. Functionally, protein L1 is also a translational repressor protein, it controls the translation of the L11 operon by binding to its mRNA. The protein is Large ribosomal subunit protein uL1 of Xanthomonas oryzae pv. oryzae (strain KACC10331 / KXO85).